A 436-amino-acid chain; its full sequence is 3-ketoacyl-CoA thiolase (436 aa).

The Acyl-thioester intermediate role is filled by Cys99. Catalysis depends on proton acceptor residues His392 and Cys422.

The protein belongs to the thiolase-like superfamily. Thiolase family. As to quaternary structure, heterotetramer of two alpha chains (FadJ) and two beta chains (FadI).

It localises to the cytoplasm. It catalyses the reaction an acyl-CoA + acetyl-CoA = a 3-oxoacyl-CoA + CoA. The protein operates within lipid metabolism; fatty acid beta-oxidation. Functionally, catalyzes the final step of fatty acid oxidation in which acetyl-CoA is released and the CoA ester of a fatty acid two carbons shorter is formed. In Escherichia coli (strain SMS-3-5 / SECEC), this protein is 3-ketoacyl-CoA thiolase.